The primary structure comprises 310 residues: Olfactory receptor 5AR1 (310 aa).

Over 1 to 28 (MDKENSSMVTEFIFMGITQDPQMEIIFF) the chain is Extracellular. N-linked (GlcNAc...) asparagine glycosylation is present at N5. A helical membrane pass occupies residues 29–49 (VVFLIVYLVNVVGNIGMIILI). At 50–58 (TTDTQLHTP) the chain is on the cytoplasmic side. A helical membrane pass occupies residues 59 to 79 (MYFFLCNLSFVDLGYSSAIAP). Residues 80–100 (RMLADFLTNHKVISFSSCATQ) are Extracellular-facing. Residues C97 and C189 are joined by a disulfide bond. A helical membrane pass occupies residues 101–120 (FAFFVGFVDAECYVLAAMAY). The Cytoplasmic portion of the chain corresponds to 121–139 (GRFVAICRPLHYSTFMSKQ). A helical membrane pass occupies residues 140–160 (VCLALMLGSYLAGLVSLVAHT). The Extracellular portion of the chain corresponds to 161 to 205 (TLTFSLSYCGSNIINHFFCEIPPLLALSCSDTYISEILLFSLCGF). The helical transmembrane segment at 206–226 (IEFSTILIIFISYTFILVAII) threads the bilayer. Topologically, residues 227–239 (RMRSAEGRLKAFS) are cytoplasmic. The helical transmembrane segment at 240–260 (TCGSHLTGITLFYGTVMFMYL) threads the bilayer. The Extracellular portion of the chain corresponds to 261-271 (RPTSSYSLDQD). A helical transmembrane segment spans residues 272-292 (KWASVFYTVIIPMLNPLIYSL). Topologically, residues 293–310 (RNKDVKAAFKKLIGKKSQ) are cytoplasmic.

The protein belongs to the G-protein coupled receptor 1 family.

It is found in the cell membrane. Its function is as follows. Odorant receptor. The polypeptide is Olfactory receptor 5AR1 (Homo sapiens (Human)).